The primary structure comprises 38 residues: Large ribosomal subunit protein bL36 (38 aa).

It belongs to the bacterial ribosomal protein bL36 family.

In Ralstonia nicotianae (strain ATCC BAA-1114 / GMI1000) (Ralstonia solanacearum), this protein is Large ribosomal subunit protein bL36.